Reading from the N-terminus, the 160-residue chain is Probable NADH dehydrogenase [ubiquinone] 1 beta subcomplex subunit 2, mitochondrial (160 aa).

This sequence belongs to the complex I NDUFB2 subunit family. As to quaternary structure, complex I is composed of 45 different subunits.

The protein localises to the mitochondrion inner membrane. In terms of biological role, accessory subunit of the mitochondrial membrane respiratory chain NADH dehydrogenase (Complex I), that is believed not to be involved in catalysis. Complex I functions in the transfer of electrons from NADH to the respiratory chain. The immediate electron acceptor for the enzyme is believed to be ubiquinone. The protein is Probable NADH dehydrogenase [ubiquinone] 1 beta subcomplex subunit 2, mitochondrial of Caenorhabditis briggsae.